We begin with the raw amino-acid sequence, 163 residues long: Nucleotide-binding protein RBAM_011030 (163 aa).

The protein belongs to the YajQ family.

Functionally, nucleotide-binding protein. The protein is Nucleotide-binding protein RBAM_011030 of Bacillus velezensis (strain DSM 23117 / BGSC 10A6 / LMG 26770 / FZB42) (Bacillus amyloliquefaciens subsp. plantarum).